Here is a 154-residue protein sequence, read N- to C-terminus: Endoribonuclease YbeY (154 aa).

Zn(2+) is bound by residues histidine 116, histidine 120, and histidine 126.

The protein belongs to the endoribonuclease YbeY family. It depends on Zn(2+) as a cofactor.

Its subcellular location is the cytoplasm. Functionally, single strand-specific metallo-endoribonuclease involved in late-stage 70S ribosome quality control and in maturation of the 3' terminus of the 16S rRNA. The polypeptide is Endoribonuclease YbeY (Buchnera aphidicola subsp. Baizongia pistaciae (strain Bp)).